Reading from the N-terminus, the 342-residue chain is Glycerol-3-phosphate dehydrogenase [NAD(P)+] (342 aa).

Residues Ser13, Trp14, and Lys108 each coordinate NADPH. Sn-glycerol 3-phosphate is bound by residues Lys108, Gly139, and Ser141. Ala143 is an NADPH binding site. Sn-glycerol 3-phosphate-binding residues include Lys194, Asp247, Ser257, Arg258, and Asn259. The Proton acceptor role is filled by Lys194. Arg258 provides a ligand contact to NADPH. Positions 282 and 284 each coordinate NADPH.

The protein belongs to the NAD-dependent glycerol-3-phosphate dehydrogenase family.

It is found in the cytoplasm. It carries out the reaction sn-glycerol 3-phosphate + NAD(+) = dihydroxyacetone phosphate + NADH + H(+). It catalyses the reaction sn-glycerol 3-phosphate + NADP(+) = dihydroxyacetone phosphate + NADPH + H(+). It participates in membrane lipid metabolism; glycerophospholipid metabolism. In terms of biological role, catalyzes the reduction of the glycolytic intermediate dihydroxyacetone phosphate (DHAP) to sn-glycerol 3-phosphate (G3P), the key precursor for phospholipid synthesis. The chain is Glycerol-3-phosphate dehydrogenase [NAD(P)+] from Lactococcus lactis subsp. cremoris (strain MG1363).